The chain runs to 653 residues: Macrolide export ATP-binding/permease protein MacB (653 aa).

Positions 6 to 244 (LQLTRVTRRF…DAAPDASGGA (239 aa)) constitute an ABC transporter domain. ATP is bound at residue 42–49 (GASGSGKS). 4 helical membrane passes run 278 to 298 (LLTM…VAIG), 526 to 546 (LTLL…IGVM), 587 to 607 (MGGA…SLFV), and 616 to 636 (AASI…FGFM).

This sequence belongs to the ABC transporter superfamily. Macrolide exporter (TC 3.A.1.122) family. Homodimer.

Its subcellular location is the cell inner membrane. Non-canonical ABC transporter that contains transmembrane domains (TMD), which form a pore in the inner membrane, and an ATP-binding domain (NBD), which is responsible for energy generation. Confers resistance against macrolides. The chain is Macrolide export ATP-binding/permease protein MacB from Burkholderia pseudomallei (strain 1710b).